A 201-amino-acid polypeptide reads, in one-letter code: L(+)-tartrate dehydratase subunit beta (201 aa).

His37 is an active-site residue.

This sequence belongs to the class-I fumarase family. Heterotetramer of two alpha and two beta subunits.

It catalyses the reaction (2R,3R)-tartrate = oxaloacetate + H2O. This is L(+)-tartrate dehydratase subunit beta (ttdB) from Shigella sonnei (strain Ss046).